A 650-amino-acid polypeptide reads, in one-letter code: Chaperone protein DnaK (650 aa).

Threonine 200 is modified (phosphothreonine; by autocatalysis). The tract at residues 614-635 is disordered; the sequence is AGAAGAAGAAEGAAHAGGAQQA.

It belongs to the heat shock protein 70 family.

Functionally, acts as a chaperone. The polypeptide is Chaperone protein DnaK (Burkholderia lata (strain ATCC 17760 / DSM 23089 / LMG 22485 / NCIMB 9086 / R18194 / 383)).